A 1043-amino-acid chain; its full sequence is MREEPTAGTADATLNKLLQAADLSGYESDLRRKLKLRNAADLQYVEEVDLLSVGMSRPEQKRLRKEYTKMFPSGIFGKVKKAFKRAESLDRKTSNSVANQDDNDHHVIPIEKITLCKELGQGEFGSVWQAGWKNSAGSDVIQVAVKCVGSDKLLATSSSFLQEAAIMTRMRHEHVVRLYGVVLDTKKIMLVSELATCGSLLECLHKPALRDSFPVHVLCDYAEQIAMGMSYLELQRLIHRDLAARNVLVFSPKLVKISDFGLSRSLGIGEDYYRSEFTPNLKLPIAWCAPECINFLKFTSKSDVWAYGVTIWEMFSYGEMPWKGRSGAQILELVDRKKELLTRPKACPEDIYDMLKETWTHQVQDRPTFSDIVAKFPERRAQSVRAVVDCKDSAADHLHFKKDDLIVVISRSPAQYPDGYYWFGSLRNGKLGLFRPTDTVAHLGSEPPCSNGTIENGFSEKEKGGKKNKKAEKESERERKKLLISEPVGDVRHTCHVGIDGTAFGLLQLDKKAMCPTSSSPSTSRGSQASPAPSHTSSSTTSSVHLRETVARNGVPIKETMSLRDVGPLSRDALNLRDTVSPPVARAPSQPPSYSQPRPPPRSVSSVSSGNQHSVQVHDQFSSLDRSRGSLTPTAPPLTASAANSLKDPLTGISLSIPSNNLISYMDDQEDDHRWTRSPGAISQSTTLTALSSSRKDPIPAPRGPVAAVYARGKDIPTPASKSDIALCEKIEDLNRDLTNYSIGTICDYSEDRPLLDSMNRTISSSTTHQPPPQSSEARIRFMTEQEVRKINEKSAREHRKTEDLLREERQKEQKPGEIEEPQQPAESLYSTRTPQQEGWSSAAQEAYKLLVECGTNLKQASVSPPPMSPTSSRLSTLDRSSISPAPPRPVTPPLSVRNETISMRKSQQEEMEHVTVEENSPKRVHIIETKLIDGPARGMSPIQDRHIPAFTTPMSNGSFRKAPAPTPVSPAPAGSTDQKPPPCRPPKTRQFPLVIDERNLAYDNLNGFGAGARVAPPVPPKPKVRTIFSFADDQKKQKEVAN.

The Protein kinase domain occupies Ile-113–Arg-379. Residues Leu-119 to Val-127 and Lys-146 each bind ATP. The Proton acceptor role is filled by Asp-241. Residues Arg-379–Gly-444 form the SH3 domain. Residues Leu-443–Lys-481 are disordered. A compositionally biased stretch (basic and acidic residues) spans Phe-458–Lys-481. The CRIB domain occupies Ile-484–Gly-498. 4 disordered regions span residues Met-514–Asn-644, Lys-790–Ser-842, Lys-859–Arg-898, and Leu-932–Pro-993. The segment covering Pro-516–Ser-543 has biased composition (low complexity). Residues Gly-610–Leu-624 show a composition bias toward polar residues. Residues Ser-630 to Asn-644 are compositionally biased toward low complexity. Residues Glu-785–Lys-812 are a coiled coil. A compositionally biased stretch (basic and acidic residues) spans Lys-790–Glu-818. Residues Pro-825–Ser-842 are compositionally biased toward polar residues. Low complexity predominate over residues Pro-870–Ser-884.

It belongs to the protein kinase superfamily. Tyr protein kinase family. Mg(2+) serves as cofactor.

It carries out the reaction L-tyrosyl-[protein] + ATP = O-phospho-L-tyrosyl-[protein] + ADP + H(+). The enzyme catalyses L-seryl-[protein] + ATP = O-phospho-L-seryl-[protein] + ADP + H(+). The catalysed reaction is L-threonyl-[protein] + ATP = O-phospho-L-threonyl-[protein] + ADP + H(+). Probable tyrosine protein kinase which plays a role in vulva development, probably by acting as a negative regulator of the let-23/EGFR and let-60/ras pathway. Involved in the negative regulation of germline development. The sequence is that of Ack-related non-receptor tyrosine kinase from Caenorhabditis elegans.